The primary structure comprises 425 residues: Histidine--tRNA ligase 2 (425 aa).

The protein belongs to the class-II aminoacyl-tRNA synthetase family. In terms of assembly, homodimer.

The protein resides in the cytoplasm. The enzyme catalyses tRNA(His) + L-histidine + ATP = L-histidyl-tRNA(His) + AMP + diphosphate + H(+). The protein is Histidine--tRNA ligase 2 of Shouchella clausii (strain KSM-K16) (Alkalihalobacillus clausii).